The following is an 836-amino-acid chain: Eukaryotic translation initiation factor 3 subunit C (836 aa).

A disordered region spans residues 1–97 (MSRFFVSGYD…RRVVKSAKEK (97 aa)). A compositionally biased stretch (acidic residues) spans 13–55 (SSSEEEDLLTSSEEELMSSEQESDSEFDDEFANDDDSDSSDSD). Basic and acidic residues predominate over residues 86 to 97 (EGRRVVKSAKEK). In terms of domain architecture, PCI spans 586–761 (FHMHINLELL…KSINFVSSEH (176 aa)). Residues 783 to 817 (DKNEKTASNGHGRKTTQQQQQQQQKEQREQTHDEN) are disordered. The segment covering 797 to 806 (TTQQQQQQQQ) has biased composition (low complexity). Residues 807-817 (KEQREQTHDEN) are compositionally biased toward basic and acidic residues.

It belongs to the eIF-3 subunit C family. As to quaternary structure, component of the eukaryotic translation initiation factor 3 (eIF-3) complex.

Its subcellular location is the cytoplasm. In terms of biological role, component of the eukaryotic translation initiation factor 3 (eIF-3) complex, which is involved in protein synthesis of a specialized repertoire of mRNAs and, together with other initiation factors, stimulates binding of mRNA and methionyl-tRNAi to the 40S ribosome. The eIF-3 complex specifically targets and initiates translation of a subset of mRNAs involved in cell proliferation. The sequence is that of Eukaryotic translation initiation factor 3 subunit C from Meyerozyma guilliermondii (strain ATCC 6260 / CBS 566 / DSM 6381 / JCM 1539 / NBRC 10279 / NRRL Y-324) (Yeast).